Here is a 335-residue protein sequence, read N- to C-terminus: Nicotinate-nucleotide--dimethylbenzimidazole phosphoribosyltransferase (335 aa).

The active-site Proton acceptor is E304.

It belongs to the CobT family.

The catalysed reaction is 5,6-dimethylbenzimidazole + nicotinate beta-D-ribonucleotide = alpha-ribazole 5'-phosphate + nicotinate + H(+). The protein operates within nucleoside biosynthesis; alpha-ribazole biosynthesis; alpha-ribazole from 5,6-dimethylbenzimidazole: step 1/2. In terms of biological role, catalyzes the synthesis of alpha-ribazole-5'-phosphate from nicotinate mononucleotide (NAMN) and 5,6-dimethylbenzimidazole (DMB). This chain is Nicotinate-nucleotide--dimethylbenzimidazole phosphoribosyltransferase, found in Thermus thermophilus (strain ATCC 27634 / DSM 579 / HB8).